The primary structure comprises 391 residues: Heme A synthase (391 aa).

8 consecutive transmembrane segments (helical) span residues 37-57 (IRLWLMALFLLVMAMIVVGGL), 121-141 (RQLGRVIGLVWAVGFLGFLAA), 152-172 (LLALGALGGLQGGIGWWMVAS), 186-206 (LATHLGLAFIILGLIAWQALL), 229-249 (TTVLIGVAFLQIVLGALVAGI), 298-318 (FLHRMAGYTLAALGLIFWIFG), 332-352 (LLAMALLAQILLGVGTVLSAA), and 354-374 (WQVAIAHQVGAVVIWVLILHA). His300 serves as a coordination point for heme. His360 is a heme binding site.

This sequence belongs to the COX15/CtaA family. Type 2 subfamily. As to quaternary structure, interacts with CtaB. Heme b serves as cofactor.

The protein resides in the cell membrane. The enzyme catalyses Fe(II)-heme o + 2 A + H2O = Fe(II)-heme a + 2 AH2. The protein operates within porphyrin-containing compound metabolism; heme A biosynthesis; heme A from heme O: step 1/1. Functionally, catalyzes the conversion of heme O to heme A by two successive hydroxylations of the methyl group at C8. The first hydroxylation forms heme I, the second hydroxylation results in an unstable dihydroxymethyl group, which spontaneously dehydrates, resulting in the formyl group of heme A. This is Heme A synthase from Cereibacter sphaeroides (strain ATCC 17023 / DSM 158 / JCM 6121 / CCUG 31486 / LMG 2827 / NBRC 12203 / NCIMB 8253 / ATH 2.4.1.) (Rhodobacter sphaeroides).